We begin with the raw amino-acid sequence, 154 residues long: Ribonuclease 1 (154 aa).

The protein belongs to the BetVI family.

It localises to the cytoplasm. Its function is as follows. Catalyzes the two-stage endonucleolytic cleavage to 3'-phosphomononucleotides and 3'-phosphooligonucleotides with 2',3'-cyclic phosphate intermediates. This is Ribonuclease 1 from Panax ginseng (Korean ginseng).